Consider the following 650-residue polypeptide: L-aspartate N-monooxygenase (nitrosuccinate-forming) (650 aa).

This sequence belongs to the nitrosuccinic acid synthase family. The cofactor is FAD.

The catalysed reaction is L-aspartate + 3 NADPH + 3 O2 + 2 H(+) = 2-nitrobutanedioate + 3 NADP(+) + 4 H2O. In terms of biological role, involved in the biosynthesis of desferrioxamine derivatives which have iron-binding properties and may act as siderophores. Catalyzes the iterative oxidation of L-aspartic acid to nitrosuccinic acid (2-nitrobutanedioate) via N-hydroxyaspartic acid and nitrososuccinic acid. The protein is L-aspartate N-monooxygenase (nitrosuccinate-forming) of Streptomyces davaonensis (strain DSM 101723 / JCM 4913 / KCC S-0913 / 768).